We begin with the raw amino-acid sequence, 357 residues long: Glycerol-1-phosphate dehydrogenase [NAD(P)+] (357 aa).

NAD(+) is bound by residues 104-108 and 126-129; these read GKTID and TAAS. Asp-131 lines the substrate pocket. Ser-135 lines the NAD(+) pocket. Position 178 (Asp-178) interacts with substrate. Positions 178 and 258 each coordinate Zn(2+). Substrate is bound at residue His-262. Residue His-274 coordinates Zn(2+).

The protein belongs to the glycerol-1-phosphate dehydrogenase family. It depends on Zn(2+) as a cofactor.

The protein resides in the cytoplasm. The catalysed reaction is sn-glycerol 1-phosphate + NAD(+) = dihydroxyacetone phosphate + NADH + H(+). It carries out the reaction sn-glycerol 1-phosphate + NADP(+) = dihydroxyacetone phosphate + NADPH + H(+). Its pathway is membrane lipid metabolism; glycerophospholipid metabolism. In terms of biological role, catalyzes the NAD(P)H-dependent reduction of dihydroxyacetonephosphate (DHAP or glycerone phosphate) to glycerol 1-phosphate (G1P). The G1P thus generated is used as the glycerophosphate backbone of phospholipids in the cellular membranes of Archaea. The polypeptide is Glycerol-1-phosphate dehydrogenase [NAD(P)+] (Methanococcoides burtonii (strain DSM 6242 / NBRC 107633 / OCM 468 / ACE-M)).